Reading from the N-terminus, the 2894-residue chain is Bifunctional DNA-directed RNA polymerase subunit beta-beta' (2894 aa).

A DNA-directed RNA polymerase subunit beta region spans residues 1–1378; it reads MANFTKLKNR…DVNIYGDEQD (1378 aa). The interval 1385–2894 is DNA-directed RNA polymerase subunit beta'; sequence PIAIKEDERP…QEEYEEDEEE (1510 aa). 4 residues coordinate Zn(2+): cysteine 1450, cysteine 1452, cysteine 1465, and cysteine 1468. Positions 1849, 1851, and 1853 each coordinate Mg(2+). 4 residues coordinate Zn(2+): cysteine 2179, cysteine 2253, cysteine 2260, and cysteine 2263.

In the N-terminal section; belongs to the RNA polymerase beta chain family. It in the C-terminal section; belongs to the RNA polymerase beta' chain family. As to quaternary structure, the RNAP catalytic core consists of 2 alpha, 1 beta/beta' and 1 omega subunit. When a sigma factor is associated with the core the holoenzyme is formed, which can initiate transcription. Mg(2+) is required as a cofactor. It depends on Zn(2+) as a cofactor.

The enzyme catalyses RNA(n) + a ribonucleoside 5'-triphosphate = RNA(n+1) + diphosphate. Its function is as follows. DNA-dependent RNA polymerase catalyzes the transcription of DNA into RNA using the four ribonucleoside triphosphates as substrates. This is Bifunctional DNA-directed RNA polymerase subunit beta-beta' (rpoBC) from Helicobacter hepaticus (strain ATCC 51449 / 3B1).